The primary structure comprises 469 residues: ATP synthase subunit beta (469 aa).

ATP is bound at residue 155–162 (GGAGVGKT).

It belongs to the ATPase alpha/beta chains family. In terms of assembly, F-type ATPases have 2 components, CF(1) - the catalytic core - and CF(0) - the membrane proton channel. CF(1) has five subunits: alpha(3), beta(3), gamma(1), delta(1), epsilon(1). CF(0) has three main subunits: a(1), b(2) and c(9-12). The alpha and beta chains form an alternating ring which encloses part of the gamma chain. CF(1) is attached to CF(0) by a central stalk formed by the gamma and epsilon chains, while a peripheral stalk is formed by the delta and b chains.

It localises to the cell inner membrane. It carries out the reaction ATP + H2O + 4 H(+)(in) = ADP + phosphate + 5 H(+)(out). Functionally, produces ATP from ADP in the presence of a proton gradient across the membrane. The catalytic sites are hosted primarily by the beta subunits. This chain is ATP synthase subunit beta, found in Syntrophobacter fumaroxidans (strain DSM 10017 / MPOB).